Reading from the N-terminus, the 157-residue chain is Ribonuclease H (157 aa).

An RNase H type-1 domain is found at 1–146; that stretch reads MPDLVAYTDG…ADELARAGMA (146 aa). Mg(2+) is bound by residues D9, E52, D74, and D138.

This sequence belongs to the RNase H family. Monomer. It depends on Mg(2+) as a cofactor.

It is found in the cytoplasm. The enzyme catalyses Endonucleolytic cleavage to 5'-phosphomonoester.. In terms of biological role, endonuclease that specifically degrades the RNA of RNA-DNA hybrids. The protein is Ribonuclease H of Jannaschia sp. (strain CCS1).